Reading from the N-terminus, the 299-residue chain is Zinc import ATP-binding protein ZnuC (299 aa).

One can recognise an ABC transporter domain in the interval 13–228 (VSLANAGVQR…PEYMRLFGGT (216 aa)). Residue 45–52 (GPNGSGKS) participates in ATP binding.

This sequence belongs to the ABC transporter superfamily. Zinc importer (TC 3.A.1.15.5) family. In terms of assembly, the complex is composed of two ATP-binding proteins (ZnuC), two transmembrane proteins (ZnuB) and a solute-binding protein (ZnuA).

The protein resides in the cell inner membrane. It carries out the reaction Zn(2+)(out) + ATP(in) + H2O(in) = Zn(2+)(in) + ADP(in) + phosphate(in) + H(+)(in). Part of the ABC transporter complex ZnuABC involved in zinc import. Responsible for energy coupling to the transport system. The polypeptide is Zinc import ATP-binding protein ZnuC (Agrobacterium fabrum (strain C58 / ATCC 33970) (Agrobacterium tumefaciens (strain C58))).